A 269-amino-acid polypeptide reads, in one-letter code: Small ribosomal subunit protein uS2 (269 aa).

It belongs to the universal ribosomal protein uS2 family.

The protein is Small ribosomal subunit protein uS2 (rpsB) of Synechocystis sp. (strain ATCC 27184 / PCC 6803 / Kazusa).